Consider the following 408-residue polypeptide: Phosphoglycerate kinase (408 aa).

Residues 24-26, Arg39, 62-65, Arg121, and Arg161 contribute to the substrate site; these read DLN and HLGR. ATP contacts are provided by residues Lys211, Gly307, Glu338, and 364-367; that span reads GGDS.

This sequence belongs to the phosphoglycerate kinase family. In terms of assembly, monomer.

It localises to the cytoplasm. It catalyses the reaction (2R)-3-phosphoglycerate + ATP = (2R)-3-phospho-glyceroyl phosphate + ADP. Its pathway is carbohydrate degradation; glycolysis; pyruvate from D-glyceraldehyde 3-phosphate: step 2/5. The polypeptide is Phosphoglycerate kinase (Pseudarthrobacter chlorophenolicus (strain ATCC 700700 / DSM 12829 / CIP 107037 / JCM 12360 / KCTC 9906 / NCIMB 13794 / A6) (Arthrobacter chlorophenolicus)).